The following is a 742-amino-acid chain: Zinc finger protein 280C (742 aa).

Glycyl lysine isopeptide (Lys-Gly) (interchain with G-Cter in SUMO2) cross-links involve residues K10, K23, K42, K65, K85, K123, and K135. Residues 138-168 are compositionally biased toward polar residues; it reads FTKTSPQEDSGACSVSQSDSTQDIPSSNILQ. The segment at 138-243 is disordered; sequence FTKTSPQEDS…QSAPGSSSLR (106 aa). Glycyl lysine isopeptide (Lys-Gly) (interchain with G-Cter in SUMO2) cross-links involve residues K180, K186, and K193. Residues 182-191 show a composition bias toward polar residues; the sequence is PSTSKVNSVN. Residues 200–222 are compositionally biased toward low complexity; the sequence is SISETRPCSSSSSQTAPSGASSQ. The segment covering 223–243 has biased composition (polar residues); that stretch reads TVLSNVNTSSVQSAPGSSSLR. C2H2-type zinc fingers lie at residues 323 to 345, 360 to 383, 390 to 413, 420 to 443, and 477 to 499; these read FKCFSCTKVLKNNIRFMNHMKHH, TTCQHCYRQYPNPFQLQCHIESTH, TICKICELSFETEHMLLQHMKDTH, YICQVCQFRSSIFSDVETHFRSSH, and YRCPKCRLQFLTSKEKTEHKLEH. The segment covering 523-578 has biased composition (low complexity); the sequence is LGSSQSRASSPPSSTIPSTSLQLSVPKSKSTTTKNNSKVSANKATTTSPQTVATTT. Residues 523 to 608 form a disordered region; that stretch reads LGSSQSRASS…YKQKRQRTRK (86 aa). Positions 579 to 592 are enriched in polar residues; sequence GKPSASKPGTGTTK. A Glycyl lysine isopeptide (Lys-Gly) (interchain with G-Cter in SUMO2) cross-link involves residue K580. The segment covering 593-608 has biased composition (basic residues); sequence SKAKPSYKQKRQRTRK.

The protein resides in the nucleus. In terms of biological role, may function as a transcription factor. The sequence is that of Zinc finger protein 280C (Znf280c) from Mus musculus (Mouse).